A 317-amino-acid polypeptide reads, in one-letter code: Melanocyte-stimulating hormone receptor (317 aa).

Residues 1 to 37 are Extracellular-facing; it reads MAVQGSQRRLLGSLNSTPTAIPQLGLAANQTGARCLE. Residue N29 is glycosylated (N-linked (GlcNAc...) asparagine). Residues 38 to 63 form a helical membrane-spanning segment; it reads VSIPDGLFLSLGLVSLVENMLVVATI. The Cytoplasmic segment spans residues 64-72; that stretch reads AKNRNLHSP. Residues 73-93 form a helical membrane-spanning segment; the sequence is MYCFICCLALSDLLVSGSNVL. Over 94–118 the chain is Extracellular; the sequence is ETAVILLLEAGALVARAAVLQQVDN. Residues 119–140 form a helical membrane-spanning segment; the sequence is VIDVITCSSMLSSLCFLGAIAV. Over 141-163 the chain is Cytoplasmic; sequence DRYISIFYALRYHSIVTLPRARR. The helical transmembrane segment at 164–183 threads the bilayer; sequence AIAAIWVASVLFSTLFIAYC. Over 184–191 the chain is Extracellular; it reads DHTAVLLC. A helical transmembrane segment spans residues 192 to 211; it reads LVVFFLAVLVLMAVLYVHML. The Cytoplasmic segment spans residues 212-240; that stretch reads ARACQHAQGIARLHKRQRPVHQGFGLKGA. A helical membrane pass occupies residues 241-266; it reads VTLTILLGIFFLCWGPFFLHLTLIVL. The Extracellular segment spans residues 267 to 279; it reads CPEHPTCGCIFKN. Residues 280 to 300 form a helical membrane-spanning segment; sequence FNLFLALIICNAIIDPLIYAF. Topologically, residues 301-317 are cytoplasmic; the sequence is HSQELRRTLKEVLTCSW. Residue C315 is the site of S-palmitoyl cysteine attachment.

It belongs to the G-protein coupled receptor 1 family. Interacts with MGRN1, but does not undergo MGRN1-mediated ubiquitination; this interaction competes with GNAS-binding and thus inhibits agonist-induced cAMP production. Interacts with OPN3; the interaction results in a decrease in MC1R-mediated cAMP signaling and ultimately a decrease in melanin production in melanocytes.

It localises to the cell membrane. Its function is as follows. Receptor for MSH (alpha, beta and gamma) and ACTH. The activity of this receptor is mediated by G proteins which activate adenylate cyclase. Mediates melanogenesis, the production of eumelanin (black/brown) and phaeomelanin (red/yellow), via regulation of cAMP signaling in melanocytes. The sequence is that of Melanocyte-stimulating hormone receptor (MC1R) from Pan troglodytes (Chimpanzee).